A 238-amino-acid polypeptide reads, in one-letter code: Probable transcriptional regulatory protein SZO_02930 (238 aa).

It belongs to the TACO1 family. YeeN subfamily.

It localises to the cytoplasm. This chain is Probable transcriptional regulatory protein SZO_02930, found in Streptococcus equi subsp. zooepidemicus (strain H70).